Here is a 121-residue protein sequence, read N- to C-terminus: uncharacterized protein (121 aa).

A helical membrane pass occupies residues 65-84 (TILFYTPTLICFLFLQNFLY).

The protein resides in the membrane. This is an uncharacterized protein from Saccharomyces cerevisiae (strain ATCC 204508 / S288c) (Baker's yeast).